A 101-amino-acid polypeptide reads, in one-letter code: Phosphoribosyl-AMP cyclohydrolase (101 aa).

Asp-71 provides a ligand contact to Mg(2+). Cys-72 contacts Zn(2+). Asp-73 and Asp-75 together coordinate Mg(2+). Residues Cys-88 and Cys-95 each contribute to the Zn(2+) site.

Belongs to the PRA-CH family. Homodimer. Requires Mg(2+) as cofactor. The cofactor is Zn(2+).

The protein localises to the cytoplasm. It catalyses the reaction 1-(5-phospho-beta-D-ribosyl)-5'-AMP + H2O = 1-(5-phospho-beta-D-ribosyl)-5-[(5-phospho-beta-D-ribosylamino)methylideneamino]imidazole-4-carboxamide. Its pathway is amino-acid biosynthesis; L-histidine biosynthesis; L-histidine from 5-phospho-alpha-D-ribose 1-diphosphate: step 3/9. Its function is as follows. Catalyzes the hydrolysis of the adenine ring of phosphoribosyl-AMP. The protein is Phosphoribosyl-AMP cyclohydrolase of Bacillus cereus (strain ATCC 14579 / DSM 31 / CCUG 7414 / JCM 2152 / NBRC 15305 / NCIMB 9373 / NCTC 2599 / NRRL B-3711).